The following is a 31-amino-acid chain: U13-ctenitoxin-Pn1b (31 aa).

3 disulfide bridges follow: Cys3-Cys17, Cys10-Cys21, and Cys16-Cys30.

In terms of tissue distribution, expressed by the venom gland.

The protein localises to the secreted. Acts as a neurotoxin. This chain is U13-ctenitoxin-Pn1b, found in Phoneutria nigriventer (Brazilian armed spider).